The following is a 1237-amino-acid chain: Tyrosine-protein kinase sid-3 (1237 aa).

The Protein kinase domain occupies 107 to 369 (IKLYELIGEG…REDLVAAMFL (263 aa)). Residues 113–121 (IGEGSFAVV) and Lys-139 each bind ATP. The Proton acceptor role is filled by Asp-230. One can recognise an SH3 domain in the interval 366-426 (AMFLDAVARE…PRSVVFAQTN (61 aa)). Disordered regions lie at residues 683–704 (NQGS…GIQN), 741–802 (PPAP…APVQ), 826–919 (IQPQ…EERR), 940–986 (SNST…SEPI), 999–1018 (SATT…PSPP), and 1134–1156 (QQRQ…SAAS). Polar residues-rich tracts occupy residues 749-766 (QPVS…TLQK), 778-791 (KRPT…SNGF), and 847-863 (SAPT…SQAS). Low complexity-rich tracts occupy residues 881–910 (TPIT…TSTT) and 940–961 (SNST…PSTA). Residues 1138 to 1156 (AGSSSRAVPPASASTSAAS) show a composition bias toward low complexity.

Belongs to the protein kinase superfamily. Tyr protein kinase family. SYK/ZAP-70 subfamily. Ubiquitously present in all tissues tested. Expressed in the somatic cells of gut, pharynx, body wall muscle, neurons, skin and excretory canal cells.

Its subcellular location is the cytoplasm. It carries out the reaction L-tyrosyl-[protein] + ATP = O-phospho-L-tyrosyl-[protein] + ADP + H(+). Its function is as follows. Tyrosine-protein kinase which plays a role in RNA-mediated gene silencing by mediating import of double-stranded RNA (dsRNA) into cells. Not required for import of ingested dsRNA into intestinal cells but involved in subsequent export from intestinal cells to internal tissues. In Caenorhabditis elegans, this protein is Tyrosine-protein kinase sid-3 (sid-3).